A 311-amino-acid polypeptide reads, in one-letter code: Bifunctional pinoresinol-lariciresinol reductase (311 aa).

Residues 10–16 (GGTGYLG), Arg-35, and Lys-44 each bind NADP(+). Lys-138 acts as the Proton acceptor in catalysis. Arg-142 serves as a coordination point for NADP(+). Residue His-270 participates in substrate binding.

The protein belongs to the NmrA-type oxidoreductase family. Isoflavone reductase subfamily. As to quaternary structure, dimer. In terms of tissue distribution, expressed in rhizomes, stems, and leaves.

It catalyses the reaction (-)-secoisolariciresinol + NADP(+) = (+)-lariciresinol + NADPH + H(+). The catalysed reaction is (+)-lariciresinol + NADP(+) = (+)-pinoresinol + NADPH + H(+). The protein operates within aromatic compound metabolism; phenylpropanoid biosynthesis. In terms of biological role, reductase involved in lignan biosynthesis. Also involved in the biosynthesis of etoposide, a chemotherapeutic compound of the topoisomerase inhibitor family. Catalyzes the enantioselective sequential conversion of (+)-pinoresinol into (+)-lariciresinol and of (+)-lariciresinol into (-)-secoisolariciresinol. Abstracts the 4R-hydride from the NADPH cofactor during catalysis. The polypeptide is Bifunctional pinoresinol-lariciresinol reductase (Sinopodophyllum hexandrum (Himalayan may apple)).